The following is a 304-amino-acid chain: Glutaminase (304 aa).

The substrate site is built by serine 63, asparagine 113, glutamate 157, asparagine 164, tyrosine 188, tyrosine 240, and valine 258.

The protein belongs to the glutaminase family. As to quaternary structure, homotetramer.

It carries out the reaction L-glutamine + H2O = L-glutamate + NH4(+). This chain is Glutaminase, found in Chromobacterium violaceum (strain ATCC 12472 / DSM 30191 / JCM 1249 / CCUG 213 / NBRC 12614 / NCIMB 9131 / NCTC 9757 / MK).